The following is a 473-amino-acid chain: GTPase Der (473 aa).

EngA-type G domains are found at residues 3-167 (FKVA…KGLE) and 203-378 (LRVA…TFWN). GTP is bound by residues 9-16 (GRPNVGKS), 56-60 (DTAGL), 119-122 (NKCE), 209-216 (GRPNVGKS), 256-260 (DTAGM), and 321-324 (NKWD). Residues 379-463 (ARVPTARLNR…PIRLFMRKTH (85 aa)) enclose the KH-like domain.

Belongs to the TRAFAC class TrmE-Era-EngA-EngB-Septin-like GTPase superfamily. EngA (Der) GTPase family. In terms of assembly, associates with the 50S ribosomal subunit.

Its function is as follows. GTPase that plays an essential role in the late steps of ribosome biogenesis. This chain is GTPase Der, found in Parvibaculum lavamentivorans (strain DS-1 / DSM 13023 / NCIMB 13966).